A 130-amino-acid chain; its full sequence is Small ribosomal subunit protein uS9 (130 aa).

It belongs to the universal ribosomal protein uS9 family.

This Clostridium perfringens (strain ATCC 13124 / DSM 756 / JCM 1290 / NCIMB 6125 / NCTC 8237 / Type A) protein is Small ribosomal subunit protein uS9.